The chain runs to 263 residues: Putative S-adenosyl-L-methionine-dependent methyltransferase Mkms_0098 (263 aa).

S-adenosyl-L-methionine-binding positions include aspartate 121 and 150-151 (ES).

The protein belongs to the UPF0677 family.

Exhibits S-adenosyl-L-methionine-dependent methyltransferase activity. This is Putative S-adenosyl-L-methionine-dependent methyltransferase Mkms_0098 from Mycobacterium sp. (strain KMS).